Consider the following 1060-residue polypeptide: DNA-directed RNA polymerase subunit beta (1060 aa).

The protein belongs to the RNA polymerase beta chain family. As to quaternary structure, in plastids the minimal PEP RNA polymerase catalytic core is composed of four subunits: alpha, beta, beta', and beta''. When a (nuclear-encoded) sigma factor is associated with the core the holoenzyme is formed, which can initiate transcription.

It localises to the plastid. Its subcellular location is the chloroplast. It carries out the reaction RNA(n) + a ribonucleoside 5'-triphosphate = RNA(n+1) + diphosphate. In terms of biological role, DNA-dependent RNA polymerase catalyzes the transcription of DNA into RNA using the four ribonucleoside triphosphates as substrates. This Lactuca sativa (Garden lettuce) protein is DNA-directed RNA polymerase subunit beta.